A 790-amino-acid chain; its full sequence is F-box and leucine-rich repeat protein 13 (790 aa).

In terms of domain architecture, F-box spans 237–283 (AFDISVLPEQAILQIFLYLTFKDMMACSRVNRSWMAMIQRGSLWNSI). LRR repeat units follow at residues 503–525 (QLTV…HFFD), 531–552 (RLRE…IRLS), 557–579 (NLHY…YIAS), 582–602 (SLIS…TILS), 606–628 (KLRE…AYCK), and 632–657 (LLEH…IFCT).

It belongs to the DRC6 family. In terms of assembly, component of the nexin-dynein regulatory complex (N-DRC). Directly interacts with SKP1 and CUL1. Interacts with TCTE1/DRC5.

It localises to the cytoplasm. The protein resides in the cytoskeleton. It is found in the flagellum axoneme. The protein localises to the microtubule organizing center. Its subcellular location is the centrosome. In terms of biological role, substrate-recognition component of the SCF (SKP1-CUL1-F-box protein)-type E3 ubiquitin ligase complex. Component of the nexin-dynein regulatory complex (N-DRC), a key regulator of ciliary/flagellar motility which maintains the alignment and integrity of the distal axoneme and regulates microtubule sliding in motile axonemes. Specifically targets CEP192 isoform 3 for ubiquitin-mediated proteolysis and thereby acts as a regulator of microtubule nucleation activity. The protein is F-box and leucine-rich repeat protein 13 (Fbxl13) of Mus musculus (Mouse).